Here is a 1015-residue protein sequence, read N- to C-terminus: MAVSSPTSSSSSSESLPLPSSNFASLPIMAMKRRIIDKILENRVTLIVGEPGCGKSSQVPQFLLEANMAPILCTQPRRFAVVAVAKMVAKSRNSDLGGEIGYHIGHSKILTEGSKILFKTAGVLLDEMLDKGLNALKYKVIILDEVHERSVESDLVLVCVKQFLMKNNDLRVVLMSATADITRYRDYFKELGRGERVEVVAIPSPDQRTIFQRRVLYLEQVAGLLGVSSDLSAYCPGPSPSSADTEIKPELQNLIHDLILYIHEKEPDIEKSILVFLPTYYSLEQQYHQLEPFFASFEVHILHRSIDTEQALAAMKICRSRRKVILATNIAESSVTIPKVAYVIDSCRSLQVFWDPSRKRDAVQLVWVSRSQAEQRRGRTGRTCDGEVYRLVPSAFFNKLEEHEPPSILKLSLRQQVLHICCTESRAINDANALLAKAMDPPDPDVVDDALRMLLSIQALRKSPRGRYEPTFYGRLLASFPLSFDASILVVKFGEMGMLRQGILLGVLMDTLPLPIHHPFGDDSLFLEYVDHYFGGSKTISGGRREMVLMANFCAFQFWQRVFKDKHRLENLKQLLSKEKDKDLKLMFPEIEKEWCDFHNIAQSSFYHVSELYEDTLSSFHRFRPQFISSSDSQPTYYNPYEFDHTCYIECQPSEDKYLHSEDVDNNQPPPEVRKCVSVPFVPPNAFQANAIAENMASIIKEIRTQCTPSESDNGHGALEPEDYVEYGEAPVCVYFLNGYCNRGGQCTFTHTLQSTRPACKFFASSQGCRNGESCLFSHAMRRRTTSYLPPPQCLPEEDGSSTSPLLDLFPTSSEGCILVFDDSDMHFTSSIANRYPSWRILSTSSSSETLFCDSSLADTRIFWGLNHPYQTIISKAGRENPIPWNEVKCVLWFLNPDSYADTPEKQKTILQNFFEHMAIRLLGDKLYKIRVVLTMNNVRFSLLQVEKLARESFFFLGESFPHDSESFGAFQDTLTIQKPMLVSRPISYVFNLHPPSDIQFGNYTSLLRKSLHNK.

The region spanning 36 to 197 is the Helicase ATP-binding domain; the sequence is IDKILENRVT…FKELGRGERV (162 aa). 49-56 contacts ATP; that stretch reads GEPGCGKS. Residues 144–147 carry the DEVH box motif; the sequence is DEVH. Residues 254–419 form the Helicase C-terminal domain; the sequence is LIHDLILYIH…KLSLRQQVLH (166 aa). 2 C3H1-type zinc fingers span residues 727–753 and 754–782; these read YGEA…THTL and QSTR…HAMR.

It belongs to the DExH box helicase family.

The catalysed reaction is ATP + H2O = ADP + phosphate + H(+). This chain is DExH-box ATP-dependent RNA helicase DExH8, found in Arabidopsis thaliana (Mouse-ear cress).